The sequence spans 322 residues: Protein-L-isoaspartate O-methyltransferase (322 aa).

The disordered stretch occupies residues 1-101 (MSGERAKRFP…AKQGDRSAAP (101 aa)). Residues 14-29 (EDLKREPRKPEGRVAE) show a composition bias toward basic and acidic residues. Composition is skewed to low complexity over residues 33-51 (AGDA…PAAA) and 76-91 (HAPA…PQGG). Residue S170 is part of the active site.

It belongs to the methyltransferase superfamily. L-isoaspartyl/D-aspartyl protein methyltransferase family.

Its subcellular location is the cytoplasm. The enzyme catalyses [protein]-L-isoaspartate + S-adenosyl-L-methionine = [protein]-L-isoaspartate alpha-methyl ester + S-adenosyl-L-homocysteine. Its function is as follows. Catalyzes the methyl esterification of L-isoaspartyl residues in peptides and proteins that result from spontaneous decomposition of normal L-aspartyl and L-asparaginyl residues. It plays a role in the repair and/or degradation of damaged proteins. The polypeptide is Protein-L-isoaspartate O-methyltransferase (Burkholderia pseudomallei (strain 1710b)).